Here is a 36-residue protein sequence, read N- to C-terminus: Zinc metalloproteinase-disintegrin-like VaH1 (36 aa).

A Peptidase M12B domain is found at 1–36; the sequence is MVTKYSSIFMSPILSNPPILYFSDCSREXYQKXLTN.

It belongs to the venom metalloproteinase (M12B) family. P-III subfamily. P-IIIa sub-subfamily. Monomer. It depends on Zn(2+) as a cofactor. Post-translationally, the N-terminus is blocked. In terms of processing, glycosylated. In terms of tissue distribution, expressed by the venom gland.

It is found in the secreted. With respect to regulation, inhibited by EDTA, but not inhibited by iodoacetamide, PMSF and pepstatin A. Functionally, snake venom zinc metalloprotease that exhibits strong hemorrhagic activity. It also degrades alpha-chain of fibrinogen (FGA), but not the beta- and the gamma-chains. Possesses potent azocaseinolytic activity and cleaves insulin B-chain, hydrolyzing it at positions Ala(14)-Leu(15), followed by Tyr(16)-Leu(17) and His(10)-Leu(11). In vivo, subcutaneous injection into mice induces strong hemorrhage. This is Zinc metalloproteinase-disintegrin-like VaH1 from Vipera ammodytes ammodytes (Western sand viper).